A 202-amino-acid polypeptide reads, in one-letter code: NADH-quinone oxidoreductase subunit C (202 aa).

Belongs to the complex I 30 kDa subunit family. In terms of assembly, NDH-1 is composed of 14 different subunits. Subunits NuoB, C, D, E, F, and G constitute the peripheral sector of the complex.

The protein resides in the cell inner membrane. It catalyses the reaction a quinone + NADH + 5 H(+)(in) = a quinol + NAD(+) + 4 H(+)(out). Functionally, NDH-1 shuttles electrons from NADH, via FMN and iron-sulfur (Fe-S) centers, to quinones in the respiratory chain. The immediate electron acceptor for the enzyme in this species is believed to be ubiquinone. Couples the redox reaction to proton translocation (for every two electrons transferred, four hydrogen ions are translocated across the cytoplasmic membrane), and thus conserves the redox energy in a proton gradient. The chain is NADH-quinone oxidoreductase subunit C from Albidiferax ferrireducens (strain ATCC BAA-621 / DSM 15236 / T118) (Rhodoferax ferrireducens).